Consider the following 684-residue polypeptide: Homoaconitase, mitochondrial (684 aa).

Residues cysteine 337, cysteine 397, and cysteine 400 each coordinate [4Fe-4S] cluster.

Belongs to the aconitase/IPM isomerase family. [4Fe-4S] cluster serves as cofactor.

It localises to the mitochondrion. It catalyses the reaction (2R,3S)-homoisocitrate = cis-homoaconitate + H2O. It functions in the pathway amino-acid biosynthesis; L-lysine biosynthesis via AAA pathway; L-alpha-aminoadipate from 2-oxoglutarate: step 3/5. Functionally, catalyzes the reversible hydration of cis-homoaconitate to (2R,3S)-homoisocitrate, a step in the alpha-aminoadipate pathway for lysine biosynthesis. This is Homoaconitase, mitochondrial (LYS4) from Candida albicans (strain SC5314 / ATCC MYA-2876) (Yeast).